Consider the following 169-residue polypeptide: NADH-quinone oxidoreductase subunit I (169 aa).

4Fe-4S ferredoxin-type domains lie at 61 to 90 (RKYK…IEAQ) and 100 to 129 (VRYD…EGPN). Cys70, Cys73, Cys76, Cys80, Cys109, Cys112, Cys115, and Cys119 together coordinate [4Fe-4S] cluster.

This sequence belongs to the complex I 23 kDa subunit family. As to quaternary structure, NDH-1 is composed of 14 different subunits. Subunits NuoA, H, J, K, L, M, N constitute the membrane sector of the complex. It depends on [4Fe-4S] cluster as a cofactor.

It localises to the cell inner membrane. It carries out the reaction a quinone + NADH + 5 H(+)(in) = a quinol + NAD(+) + 4 H(+)(out). In terms of biological role, NDH-1 shuttles electrons from NADH, via FMN and iron-sulfur (Fe-S) centers, to quinones in the respiratory chain. The immediate electron acceptor for the enzyme in this species is believed to be ubiquinone. Couples the redox reaction to proton translocation (for every two electrons transferred, four hydrogen ions are translocated across the cytoplasmic membrane), and thus conserves the redox energy in a proton gradient. In Ehrlichia chaffeensis (strain ATCC CRL-10679 / Arkansas), this protein is NADH-quinone oxidoreductase subunit I.